The following is a 261-amino-acid chain: 3-methyl-2-oxobutanoate hydroxymethyltransferase (261 aa).

Positions 42 and 81 each coordinate Mg(2+). Residues 42 to 43, D81, and K110 contribute to the 3-methyl-2-oxobutanoate site; that span reads DS. E112 is a Mg(2+) binding site. The active-site Proton acceptor is the E179.

It belongs to the PanB family. As to quaternary structure, homodecamer; pentamer of dimers. Mg(2+) serves as cofactor.

Its subcellular location is the cytoplasm. It catalyses the reaction 3-methyl-2-oxobutanoate + (6R)-5,10-methylene-5,6,7,8-tetrahydrofolate + H2O = 2-dehydropantoate + (6S)-5,6,7,8-tetrahydrofolate. It functions in the pathway cofactor biosynthesis; coenzyme A biosynthesis. In terms of biological role, catalyzes the reversible reaction in which hydroxymethyl group from 5,10-methylenetetrahydrofolate is transferred onto alpha-ketoisovalerate to form ketopantoate. The polypeptide is 3-methyl-2-oxobutanoate hydroxymethyltransferase (Pyrobaculum islandicum (strain DSM 4184 / JCM 9189 / GEO3)).